The following is a 215-amino-acid chain: Pyrrolidone-carboxylate peptidase 1 (215 aa).

Residues glutamate 80, cysteine 143, and histidine 167 contribute to the active site.

This sequence belongs to the peptidase C15 family. As to quaternary structure, homotetramer.

Its subcellular location is the cytoplasm. The enzyme catalyses Release of an N-terminal pyroglutamyl group from a polypeptide, the second amino acid generally not being Pro.. Removes 5-oxoproline from various penultimate amino acid residues except L-proline. This Ralstonia nicotianae (strain ATCC BAA-1114 / GMI1000) (Ralstonia solanacearum) protein is Pyrrolidone-carboxylate peptidase 1.